A 209-amino-acid polypeptide reads, in one-letter code: Chaperone protein TorD (209 aa).

This sequence belongs to the TorD/DmsD family. TorD subfamily.

Its subcellular location is the cytoplasm. Involved in the biogenesis of TorA. Acts on TorA before the insertion of the molybdenum cofactor and, as a result, probably favors a conformation of the apoenzyme that is competent for acquiring the cofactor. The sequence is that of Chaperone protein TorD from Shewanella sp. (strain MR-4).